Reading from the N-terminus, the 469-residue chain is Extracellular endo-alpha-(1-&gt;5)-L-arabinanase 2 (469 aa).

The signal sequence occupies residues 1–26 (MFNRLFRVCFLAALIMAFTLPNSVYA). Aspartate 38 (proton acceptor) is an active-site residue. Substrate-binding positions include aspartate 38, aspartate 122, 168–171 (NVVD), 188–190 (SYS), and 220–224 (HSRIE). Residue glutamate 224 is the Proton donor of the active site. Residue histidine 318 participates in Ca(2+) binding.

It belongs to the glycosyl hydrolase 43 family. Homodimer. It depends on Ca(2+) as a cofactor.

It is found in the secreted. It carries out the reaction Endohydrolysis of (1-&gt;5)-alpha-arabinofuranosidic linkages in (1-&gt;5)-arabinans.. It functions in the pathway glycan metabolism; L-arabinan degradation. In terms of biological role, involved in the degradation of arabinan and is a key enzyme in the complete degradation of the plant cell wall. Catalyzes the internal cleavage of alpha-(1-&gt;5)-L-arabinofuranosyl residues of the alpha-1,5-L-arabinan to produce arabino-oligosaccharides and L-arabinose. It is also active toward linear branched sugar beet arabinan, and pectin from apple. This is Extracellular endo-alpha-(1-&gt;5)-L-arabinanase 2 (abn2) from Bacillus subtilis (strain 168).